The sequence spans 207 residues: LexA repressor (207 aa).

A DNA-binding region (H-T-H motif) is located at residues 28 to 48 (RAEIAQKLGFKSANAAEEHLK). Active-site for autocatalytic cleavage activity residues include S124 and K161.

It belongs to the peptidase S24 family. In terms of assembly, homodimer.

It catalyses the reaction Hydrolysis of Ala-|-Gly bond in repressor LexA.. In terms of biological role, represses a number of genes involved in the response to DNA damage (SOS response), including recA and lexA. In the presence of single-stranded DNA, RecA interacts with LexA causing an autocatalytic cleavage which disrupts the DNA-binding part of LexA, leading to derepression of the SOS regulon and eventually DNA repair. The chain is LexA repressor from Aeromonas salmonicida (strain A449).